A 220-amino-acid polypeptide reads, in one-letter code: Peptidyl-tRNA hydrolase (220 aa).

Y14 is a tRNA binding site. Catalysis depends on H19, which acts as the Proton acceptor. F66, N68, and N114 together coordinate tRNA. A disordered region spans residues 184–220 (QAFNSTDLRPRPEPVPAPQPADVSGPQETGPAERPEV).

The protein belongs to the PTH family. In terms of assembly, monomer.

The protein localises to the cytoplasm. It catalyses the reaction an N-acyl-L-alpha-aminoacyl-tRNA + H2O = an N-acyl-L-amino acid + a tRNA + H(+). In terms of biological role, hydrolyzes ribosome-free peptidyl-tRNAs (with 1 or more amino acids incorporated), which drop off the ribosome during protein synthesis, or as a result of ribosome stalling. Functionally, catalyzes the release of premature peptidyl moieties from peptidyl-tRNA molecules trapped in stalled 50S ribosomal subunits, and thus maintains levels of free tRNAs and 50S ribosomes. The sequence is that of Peptidyl-tRNA hydrolase from Deinococcus deserti (strain DSM 17065 / CIP 109153 / LMG 22923 / VCD115).